The sequence spans 449 residues: Tripartite motif-containing protein 64B (449 aa).

The RING-type zinc finger occupies 15–56 (CCICVNYFIDPVTIDCGHSFCRPCLCLCSEEGRAPMRCPSCR). The segment at 87-128 (SSDNICVLHEETKELFCEADKRLLCGPCSESPEHMAHSHSPI) adopts a B box-type zinc-finger fold. Positions 92, 95, 114, and 120 each coordinate Zn(2+). The stretch at 189–225 (LDEEEQRHLQALEREAEELFQQLQDSQVRMTQHLERM) forms a coiled coil. The region spanning 268-449 (ELTSWCITGV…LRPFFCFGCT (182 aa)) is the B30.2/SPRY domain.

The protein belongs to the TRIM/RBCC family.

This is Tripartite motif-containing protein 64B (TRIM64B) from Homo sapiens (Human).